The primary structure comprises 165 residues: MVNPGSSSQPPPVTASTLSWKRCAGCGGKIADRFLLYAMDSYWHSRCLKCSCCQAQLGEIGTSCYTKSGMILCRNDYIRLFGNSGACSACGQSIPASELVMRAQGNVYHLKCFTCSTCRNRLVPGDRFHYINGSLFCEHDRPTALINGHLNSLQSNPLLPDQKVC.

2 LIM zinc-binding domains span residues 21 to 83 (KRCA…LFGN) and 85 to 147 (GACS…ALIN).

Acts as a positive cofactor of GATA transcription factors to establish the identity of the ventral mesoderm during gastrulation. Down-regulation in the dorsal mesoderm is necessary for the proper formation of this territory since, when present, lmo4 may bind ldb1 and restrict the availability of this cofactor for Spemman organizer transcription factors. At neurula stages, suppresses primary neuron differentiation and modulates gene expression at the Isthmic Organizer of the midbrain-hindbrain boundary. The chain is LIM domain transcription factor LMO4.2 (lmo4.2) from Xenopus tropicalis (Western clawed frog).